We begin with the raw amino-acid sequence, 163 residues long: Phosphopantetheine adenylyltransferase (163 aa).

Residue Thr11 coordinates substrate. Residues 11–12 (TF) and His19 each bind ATP. Residues Lys43, Leu75, and Arg89 each contribute to the substrate site. Residues 90–92 (GLR), Glu100, and 125–131 (YSFISST) each bind ATP.

Belongs to the bacterial CoaD family. As to quaternary structure, homohexamer. The cofactor is Mg(2+).

The protein resides in the cytoplasm. It catalyses the reaction (R)-4'-phosphopantetheine + ATP + H(+) = 3'-dephospho-CoA + diphosphate. It participates in cofactor biosynthesis; coenzyme A biosynthesis; CoA from (R)-pantothenate: step 4/5. Its function is as follows. Reversibly transfers an adenylyl group from ATP to 4'-phosphopantetheine, yielding dephospho-CoA (dPCoA) and pyrophosphate. This is Phosphopantetheine adenylyltransferase from Acinetobacter baumannii (strain ACICU).